Reading from the N-terminus, the 438-residue chain is Death-associated inhibitor of apoptosis 1 (438 aa).

The BIR 1 repeat unit spans residues 44 to 110 (EETRLKTFTD…QRWSPNCPLL (67 aa)). Residues 194-213 (TATQATGDVQPETCRPSAAS) form a disordered region. One copy of the BIR 2 repeat lies at 226–293 (ETARLRTFEA…ALWLSQCRFV (68 aa)). Zn(2+) is bound by residues Cys263, Cys266, His283, and Cys290. Residues 322 to 346 (GGVAVASTQASEEEQQTSLSSEEAV) are disordered. The span at 327 to 345 (ASTQASEEEQQTSLSSEEA) shows a compositional bias: low complexity. An RING-type zinc finger spans residues 391–426 (CKICYGAEYNTAFLPCGHVVACAKCASSVTKCPLCR).

Belongs to the IAP family. As to quaternary structure, interacts (via BIR 2 domain) with Dronc (via residues 114-125). Rpr, hid and grim can outcompete Dronc for binding Diap1 therefore removing Diap1-mediated ubiquitination. Interacts (via BIR 2 domain) with HtrA2; this displaces any bound Dronc. Interacts with Strica. The N-terminally cleaved form interacts with Ubr3 (via UBR-type zinc finger); the interaction promotes the recruitment and uniquitination of substrate capases such as Dronc. Ubiquitinated and degraded by HtrA2 in apoptotic cells; proteolytic cleavage at specific sites in the BIR domain linker region generating inactive fragments. Mutation of one site reduces but does not abolish cleavage as another site is selected by the protease.

The catalysed reaction is S-ubiquitinyl-[E2 ubiquitin-conjugating enzyme]-L-cysteine + [acceptor protein]-L-lysine = [E2 ubiquitin-conjugating enzyme]-L-cysteine + N(6)-ubiquitinyl-[acceptor protein]-L-lysine.. Anti-apoptotic protein which functions as a caspase regulator, using its E3 ubiquitin-protein ligase activity to smother caspase activity. Binds, ubiquitinates and inactivates initiator caspase Dronc, and effector caspases Drice and Dcp-1. Acts as a Nedd8-E3 ubiquitin-protein ligase for Drice. Suppresses apoptosis by targeting the apoptosome for ubiquitination and inactivation. Plays an important role in cell motility. Overexpression suppresses rpr and hid-dependent cell death in the eye. Interaction of Diap1 with Dronc is required to suppress Dronc-mediated cell death through Diap1-mediated ubiquitination of Dronc. Acts as a positive regulator of Wnt signaling. The polypeptide is Death-associated inhibitor of apoptosis 1 (Diap1) (Drosophila melanogaster (Fruit fly)).